A 69-amino-acid polypeptide reads, in one-letter code: Putative membrane protein insertion efficiency factor (69 aa).

This sequence belongs to the UPF0161 family.

It localises to the cell inner membrane. Its function is as follows. Could be involved in insertion of integral membrane proteins into the membrane. This is Putative membrane protein insertion efficiency factor from Syntrophotalea carbinolica (strain DSM 2380 / NBRC 103641 / GraBd1) (Pelobacter carbinolicus).